The primary structure comprises 1088 residues: Protein unc-13 homolog D (1088 aa).

Residues 26-46 (VRDLQDPPPQATPEVQVQSHH) form a disordered region. In terms of domain architecture, C2 1 spans 92–239 (QPEEHQQMLQ…FKEARKDKGQ (148 aa)). Ca(2+) is bound by residues Asp127 and Asp133. Ser150 carries the phosphoserine modification. Positions 206 and 208 each coordinate Ca(2+). The interval 240-543 (DDFLGNVMLR…AKRVQDHTAA (304 aa)) is interaction with RAB27A. One can recognise an MHD1 domain in the interval 557–675 (FQLYVSLREF…RLALVYCSLI (119 aa)). The region spanning 786–893 (EDAILPLMKF…ASSRELIQKY (108 aa)) is the MHD2 domain. The region spanning 908-1033 (RLGAVTVKAS…PGLTGCVEPG (126 aa)) is the C2 2 domain. The Ca(2+) site is built by Leu938, Asp939, Asp945, Asp1003, Asp1005, and Asp1011.

The protein belongs to the unc-13 family. Interacts with RAB27A and DOC2A. Interacts with RhoG; the interaction increases RhoG affinity to the membrane lipids, targets Unc13d to membrane lipids and facilitates cytotoxic granule (CG) docking to the plasma membrane. It depends on Ca(2+) as a cofactor. In terms of tissue distribution, expressed in lung bronchial epithelium goblet/mucous cells. Also expressed in spleen and testis. Expressed at very low levels in heart muscle, kidney, liver, brain and skeletal muscle.

It localises to the cytoplasm. The protein resides in the membrane. Its subcellular location is the late endosome. It is found in the recycling endosome. The protein localises to the lysosome. In terms of biological role, plays a role in cytotoxic granule exocytosis in lymphocytes. Required for both granule maturation and granule docking and priming at the immunologic synapse. Regulates assembly of recycling and late endosomal structures, leading to the formation of an endosomal exocytic compartment that fuses with perforin-containing granules at the immunologic synapse and licences them for exocytosis. Regulates Ca(2+)-dependent secretory lysosome exocytosis in mast cells. The polypeptide is Protein unc-13 homolog D (Unc13d) (Rattus norvegicus (Rat)).